The sequence spans 97 residues: C-C motif chemokine 7 (97 aa).

Residues 1–23 (MRISATLLCLLLIAAAFSIQVWA) form the signal peptide. A Pyrrolidone carboxylic acid modification is found at Q24. N29 carries N-linked (GlcNAc...) asparagine glycosylation. Disulfide bonds link C33–C57 and C34–C73.

The protein belongs to the intercrine beta (chemokine CC) family. As to quaternary structure, monomer. Interacts with TNFAIP6 (via Link domain).

The protein localises to the secreted. Functionally, chemotactic factor that attracts monocytes and eosinophils, but not neutrophils. Augments monocyte anti-tumor activity. The polypeptide is C-C motif chemokine 7 (Ccl7) (Mus musculus (Mouse)).